The chain runs to 760 residues: Golgin subfamily A member 5 (760 aa).

The Cytoplasmic segment spans residues 1–727; the sequence is MSWFVDLAGK…IFLRRYPMAR (727 aa). Residues 95-111 are compositionally biased toward polar residues; the sequence is VSSTTPLGSSSKASSNF. Disordered regions lie at residues 95-114, 126-216, and 432-456; these read VSST…FVRP, DFLN…SQAD, and TEEK…EYTK. Residues 135–146 are compositionally biased toward basic and acidic residues; the sequence is QSEKKEVRRETV. Residues 148–166 are compositionally biased toward polar residues; it reads KAFSPTGVSAQSQMPTVSL. Positions 174–201 are enriched in low complexity; that stretch reads PSVTPTPSSTQGLSRNSSLGSLSSSSHS. Residues 249–668 are a coiled coil; it reads QGQEHVISNL…LQGGQNSASH (420 aa). Polar residues predominate over residues 441–450; it reads LQQQAKSSRS. The helical; Anchor for type IV membrane protein transmembrane segment at 728 to 748 threads the bilayer; it reads VFVIIYMALLHLWVMIVLLTY. Residues 749-760 are Extracellular-facing; sequence TPEMHHSHPDGR.

The protein resides in the golgi apparatus membrane. In terms of biological role, involved in maintaining Golgi structure. Stimulates the formation of Golgi stacks and ribbons. Involved in intra-Golgi retrograde transport. The polypeptide is Golgin subfamily A member 5 (golga5) (Danio rerio (Zebrafish)).